We begin with the raw amino-acid sequence, 324 residues long: UDP-N-acetylenolpyruvoylglucosamine reductase (324 aa).

The FAD-binding PCMH-type domain maps to 36-203; the sequence is FRAGGLAELM…THAIFEGYAE (168 aa). The active site involves arginine 183. The active-site Proton donor is the serine 232. Glutamate 302 is a catalytic residue.

Belongs to the MurB family. Requires FAD as cofactor.

Its subcellular location is the cytoplasm. It carries out the reaction UDP-N-acetyl-alpha-D-muramate + NADP(+) = UDP-N-acetyl-3-O-(1-carboxyvinyl)-alpha-D-glucosamine + NADPH + H(+). Its pathway is cell wall biogenesis; peptidoglycan biosynthesis. Cell wall formation. The sequence is that of UDP-N-acetylenolpyruvoylglucosamine reductase from Rhizobium meliloti (strain 1021) (Ensifer meliloti).